The sequence spans 984 residues: Mediator of RNA polymerase II transcription subunit 5 (984 aa).

It belongs to the Mediator complex subunit 5 family. In terms of assembly, component of the Mediator complex.

It localises to the nucleus. Component of the Mediator complex, a coactivator involved in the regulated transcription of nearly all RNA polymerase II-dependent genes. Mediator functions as a bridge to convey information from gene-specific regulatory proteins to the basal RNA polymerase II transcription machinery. Mediator is recruited to promoters by direct interactions with regulatory proteins and serves as a scaffold for the assembly of a functional preinitiation complex with RNA polymerase II and the general transcription factors. The polypeptide is Mediator of RNA polymerase II transcription subunit 5 (NUT1) (Phaeosphaeria nodorum (strain SN15 / ATCC MYA-4574 / FGSC 10173) (Glume blotch fungus)).